The chain runs to 1523 residues: Dicer-like protein 1 (1523 aa).

The segment covering 24 to 38 (LNLSGERTISTTEPT) has biased composition (polar residues). Positions 24–58 (LNLSGERTISTTEPTEGNDSSSEESGDNEQISTQR) are disordered. Positions 123-304 (LFERAKSQNT…ESATKLEVLL (182 aa)) constitute a Helicase ATP-binding domain. 136 to 143 (LDTGSGKT) lines the ATP pocket. Residues 249–252 (DEAH) carry the DEAH box motif. The Helicase C-terminal domain maps to 444-617 (LLRQKLIKYF…GIDSEIDSIL (174 aa)). Residues 640–730 (ALAILARYAS…NSVYHRRLPA (91 aa)) enclose the Dicer dsRNA-binding fold domain. A PAZ domain is found at 879 to 1007 (ELLHLVHENE…VCIEPLRISA (129 aa)). RNase III domains lie at 1031 to 1190 (IALE…LSGG) and 1241 to 1392 (GRKV…VDSD). Mg(2+) contacts are provided by glutamate 1281, aspartate 1378, and glutamate 1381. In terms of domain architecture, DRBM spans 1426–1494 (TFLQNRLTNE…SEKALSVLEN (69 aa)). 4 residues coordinate Zn(2+): cysteine 1438, histidine 1465, cysteine 1506, and cysteine 1508.

This sequence belongs to the helicase family. Dicer subfamily. Requires Mg(2+) as cofactor. Mn(2+) is required as a cofactor.

In terms of biological role, dicer-like endonuclease involved in cleaving double-stranded RNA in the RNA interference (RNAi) pathway. Produces 21 to 25 bp dsRNAs (siRNAs) which target the selective destruction of homologous RNAs leading to sequence-specific suppression of gene expression, called post-transcriptional gene silencing (PTGS). Part of a broad host defense response against viral infection and transposons. This is Dicer-like protein 1 (dcl1) from Aspergillus oryzae (strain ATCC 42149 / RIB 40) (Yellow koji mold).